The chain runs to 84 residues: Small ribosomal subunit protein bS18B (84 aa).

A compositionally biased stretch (basic residues) spans M1 to K10. Residues M1–K20 form a disordered region.

The protein belongs to the bacterial ribosomal protein bS18 family. In terms of assembly, part of the 30S ribosomal subunit. Forms a tight heterodimer with protein bS6.

Binds as a heterodimer with protein bS6 to the central domain of the 16S rRNA, where it helps stabilize the platform of the 30S subunit. The protein is Small ribosomal subunit protein bS18B of Nocardia farcinica (strain IFM 10152).